We begin with the raw amino-acid sequence, 349 residues long: tRNA pseudouridine synthase D (349 aa).

F27 contributes to the substrate binding site. D80 serves as the catalytic Nucleophile. Substrate is bound at residue N129. Positions 155-303 (GVPNYFGAQR…VEAARRAMLL (149 aa)) constitute a TRUD domain. F329 lines the substrate pocket.

It belongs to the pseudouridine synthase TruD family.

The catalysed reaction is uridine(13) in tRNA = pseudouridine(13) in tRNA. Functionally, responsible for synthesis of pseudouridine from uracil-13 in transfer RNAs. This Escherichia coli O127:H6 (strain E2348/69 / EPEC) protein is tRNA pseudouridine synthase D.